The chain runs to 269 residues: Ribonuclease HII (269 aa).

Positions 83–269 constitute an RNase H type-2 domain; the sequence is YLIAGVDEVG…HRMSFLTNIL (187 aa). Residues D89, E90, and D185 each contribute to the a divalent metal cation site.

It belongs to the RNase HII family. The cofactor is Mn(2+). Mg(2+) is required as a cofactor.

It localises to the cytoplasm. It carries out the reaction Endonucleolytic cleavage to 5'-phosphomonoester.. Endonuclease that specifically degrades the RNA of RNA-DNA hybrids. This is Ribonuclease HII from Clostridium botulinum (strain Hall / ATCC 3502 / NCTC 13319 / Type A).